Reading from the N-terminus, the 564-residue chain is Eukaryotic translation initiation factor 3 subunit L (564 aa).

Residues 331-537 form the PCI domain; that stretch reads DAIRVFANIL…IHIADTKVAR (207 aa).

This sequence belongs to the eIF-3 subunit L family. In terms of assembly, component of the eukaryotic translation initiation factor 3 (eIF-3) complex, which is composed of 13 subunits: EIF3A, EIF3B, EIF3C, EIF3D, EIF3E, EIF3F, EIF3G, EIF3H, EIF3I, EIF3J, EIF3K, EIF3L and EIF3M.

The protein localises to the cytoplasm. Component of the eukaryotic translation initiation factor 3 (eIF-3) complex, which is involved in protein synthesis of a specialized repertoire of mRNAs and, together with other initiation factors, stimulates binding of mRNA and methionyl-tRNAi to the 40S ribosome. The eIF-3 complex specifically targets and initiates translation of a subset of mRNAs involved in cell proliferation. The protein is Eukaryotic translation initiation factor 3 subunit L of Gallus gallus (Chicken).